The chain runs to 358 residues: Sulfate/thiosulfate import ATP-binding protein CysA 1 (358 aa).

The ABC transporter domain maps to 3-237 (IQVENIRKAF…PASAFVYGFL (235 aa)). Residue 35-42 (GPSGCGKT) coordinates ATP.

The protein belongs to the ABC transporter superfamily. Sulfate/tungstate importer (TC 3.A.1.6) family. As to quaternary structure, the complex is composed of two ATP-binding proteins (CysA), two transmembrane proteins (CysT and CysW) and a solute-binding protein (CysP).

The protein localises to the cell inner membrane. It carries out the reaction sulfate(out) + ATP + H2O = sulfate(in) + ADP + phosphate + H(+). The enzyme catalyses thiosulfate(out) + ATP + H2O = thiosulfate(in) + ADP + phosphate + H(+). Its function is as follows. Part of the ABC transporter complex CysAWTP involved in sulfate/thiosulfate import. Responsible for energy coupling to the transport system. The polypeptide is Sulfate/thiosulfate import ATP-binding protein CysA 1 (Chromobacterium violaceum (strain ATCC 12472 / DSM 30191 / JCM 1249 / CCUG 213 / NBRC 12614 / NCIMB 9131 / NCTC 9757 / MK)).